The primary structure comprises 303 residues: D-alanine--D-alanine ligase (303 aa).

In terms of domain architecture, ATP-grasp spans 99 to 293 (TYRFLKGTVE…FEELVEIILK (195 aa)). 125–176 (GYPCVVKPRREGSSIGVFVCESDEEFQHALKEDLPRYGSVIVQKYIPGREMT) serves as a coordination point for ATP. 3 residues coordinate Mg(2+): D248, E260, and N262.

It belongs to the D-alanine--D-alanine ligase family. The cofactor is Mg(2+). Mn(2+) serves as cofactor.

The protein resides in the cytoplasm. It catalyses the reaction 2 D-alanine + ATP = D-alanyl-D-alanine + ADP + phosphate + H(+). The protein operates within cell wall biogenesis; peptidoglycan biosynthesis. In terms of biological role, cell wall formation. The polypeptide is D-alanine--D-alanine ligase (Thermotoga maritima (strain ATCC 43589 / DSM 3109 / JCM 10099 / NBRC 100826 / MSB8)).